We begin with the raw amino-acid sequence, 68 residues long: Large ribosomal subunit protein bL31 (68 aa).

Positions 16, 18, 37, and 40 each coordinate Zn(2+).

The protein belongs to the bacterial ribosomal protein bL31 family. Type A subfamily. In terms of assembly, part of the 50S ribosomal subunit. The cofactor is Zn(2+).

Functionally, binds the 23S rRNA. The sequence is that of Large ribosomal subunit protein bL31 from Nitrosococcus oceani (strain ATCC 19707 / BCRC 17464 / JCM 30415 / NCIMB 11848 / C-107).